Reading from the N-terminus, the 421-residue chain is Alpha-tubulin N-acetyltransferase 1 (421 aa).

The region spanning 1–190 is the N-acetyltransferase domain; the sequence is MEFPFDVDAL…NNFVIFEGFF (190 aa). An N6-acetyllysine; by autocatalysis modification is found at Lys56. 124-137 provides a ligand contact to acetyl-CoA; that stretch reads FYIHESVQRHGHGR. Lys146 is subject to N6-acetyllysine; by autocatalysis. 160 to 169 lines the acetyl-CoA pocket; sequence SPKLLKFLNK. Residues 214–235 are disordered; that stretch reads PIPAAPARKLPPKRAEGDIKPY. The span at 226 to 235 shows a compositional bias: basic and acidic residues; it reads KRAEGDIKPY. An N6-acetyllysine; by autocatalysis mark is found at Lys233 and Lys244. Positions 252–284 are disordered; the sequence is PLNRAPRRATPPAHPPPRSSSLGNSPDRGPLRP. Ser272 and Ser276 each carry phosphoserine. Position 305 is an asymmetric dimethylarginine (Arg305). Ser315 carries the phosphoserine modification. Omega-N-methylarginine is present on Arg323. The span at 342–351 shows a compositional bias: polar residues; sequence FNTSFLGTGN. The tract at residues 342-398 is disordered; sequence FNTSFLGTGNQERKQGEQEAEDRSASEDQVLLQDGSGEEPTHTVAPRAQAPPAQSWM. The segment covering 352 to 367 has biased composition (basic and acidic residues); it reads QERKQGEQEAEDRSAS.

Belongs to the acetyltransferase ATAT1 family. Component of the BBSome complex. Interacts with AP2 alpha-adaptins, including AP2A2, but not with AP1 gamma-adaptin (AP1G1/AP1G2); this interaction is required for efficient alpha-tubulin acetylation, hence clathrin-coated pits are sites of microtubule acetylation. In terms of processing, autoacetylation strongly increases tubulin acetylation.

Its subcellular location is the cytoplasm. The protein resides in the membrane. It localises to the clathrin-coated pit. It is found in the cell junction. The protein localises to the focal adhesion. Its subcellular location is the cell projection. The protein resides in the axon. It localises to the cytoskeleton. It is found in the spindle. The catalysed reaction is L-lysyl-[alpha-tubulin] + acetyl-CoA = N(6)-acetyl-L-lysyl-[alpha-tubulin] + CoA + H(+). Functionally, specifically acetylates 'Lys-40' in alpha-tubulin on the lumenal side of microtubules. Promotes microtubule destabilization and accelerates microtubule dynamics; this activity may be independent of acetylation activity. Acetylates alpha-tubulin with a slow enzymatic rate, due to a catalytic site that is not optimized for acetyl transfer. Enters the microtubule through each end and diffuses quickly throughout the lumen of microtubules. Acetylates only long/old microtubules because of its slow acetylation rate since it does not have time to act on dynamically unstable microtubules before the enzyme is released. Required for normal sperm flagellar function. Promotes directional cell locomotion and chemotaxis, through AP2A2-dependent acetylation of alpha-tubulin at clathrin-coated pits that are concentrated at the leading edge of migrating cells. May facilitate primary cilium assembly. The polypeptide is Alpha-tubulin N-acetyltransferase 1 (Rattus norvegicus (Rat)).